A 249-amino-acid polypeptide reads, in one-letter code: Enolase-phosphatase E1 (249 aa).

Residues aspartate 9 and glutamate 11 each coordinate Mg(2+). Substrate contacts are provided by residues 137–138 (SS) and lysine 177. Aspartate 204 contributes to the Mg(2+) binding site.

It belongs to the HAD-like hydrolase superfamily. MasA/MtnC family. Monomer. Mg(2+) serves as cofactor.

It localises to the cytoplasm. It is found in the nucleus. It catalyses the reaction 5-methylsulfanyl-2,3-dioxopentyl phosphate + H2O = 1,2-dihydroxy-5-(methylsulfanyl)pent-1-en-3-one + phosphate. The protein operates within amino-acid biosynthesis; L-methionine biosynthesis via salvage pathway; L-methionine from S-methyl-5-thio-alpha-D-ribose 1-phosphate: step 3/6. It participates in amino-acid biosynthesis; L-methionine biosynthesis via salvage pathway; L-methionine from S-methyl-5-thio-alpha-D-ribose 1-phosphate: step 4/6. Its function is as follows. Bifunctional enzyme that catalyzes the enolization of 2,3-diketo-5-methylthiopentyl-1-phosphate (DK-MTP-1-P) into the intermediate 2-hydroxy-3-keto-5-methylthiopentenyl-1-phosphate (HK-MTPenyl-1-P), which is then dephosphorylated to form the acireductone 1,2-dihydroxy-3-keto-5-methylthiopentene (DHK-MTPene). In Lodderomyces elongisporus (strain ATCC 11503 / CBS 2605 / JCM 1781 / NBRC 1676 / NRRL YB-4239) (Yeast), this protein is Enolase-phosphatase E1.